We begin with the raw amino-acid sequence, 345 residues long: MSTSQRWTQAQARALFDKPFLELLFEAQQVHRQHFTPGEVQVSTLLSIKTGACPEDCKYCPQSARYSTGLESERLMQVQQVLDAARKARDAGSTRFCMGAAWKNPHDRDMPLLEQMVQGVKAMGLETCMTLGMLNDRQVQRLAEAGLDFYNHNLDTSPEFYGSIVTTRSYQDRLDTLSKVRQAGIKVCSGGIVGLGEDIRDRAGLLVQLANLPTPPESVPINMLVKVKGTPLADNEDVDPFEFIRTIAVARIMMPRSHVRLSAGREQMNEQTQALCFMAGANSVFYGCKLLTTPNPGEDRDMALFHKLGINIERRTATQGDVAQQAQLAEELLTADTAHYYNAAR.

The Radical SAM core domain maps to Gly38 to Arg256. Residues Cys53, Cys57, and Cys60 each coordinate [4Fe-4S] cluster. 4 residues coordinate [2Fe-2S] cluster: Cys97, Cys128, Cys188, and Arg260.

It belongs to the radical SAM superfamily. Biotin synthase family. In terms of assembly, homodimer. [4Fe-4S] cluster is required as a cofactor. Requires [2Fe-2S] cluster as cofactor.

The enzyme catalyses (4R,5S)-dethiobiotin + (sulfur carrier)-SH + 2 reduced [2Fe-2S]-[ferredoxin] + 2 S-adenosyl-L-methionine = (sulfur carrier)-H + biotin + 2 5'-deoxyadenosine + 2 L-methionine + 2 oxidized [2Fe-2S]-[ferredoxin]. Its pathway is cofactor biosynthesis; biotin biosynthesis; biotin from 7,8-diaminononanoate: step 2/2. Its function is as follows. Catalyzes the conversion of dethiobiotin (DTB) to biotin by the insertion of a sulfur atom into dethiobiotin via a radical-based mechanism. In Sodalis glossinidius (strain morsitans), this protein is Biotin synthase.